The primary structure comprises 257 residues: MAIHLVIIDALNLIRRVHSAQPNQDDIQAVVTTTGRTINRILKETEPTHIIAVFDHHLQDRGWRAEVLPKYKEDRKPMPEALQKGMDAIQESWWKLGIDSLLSDGDEADDLVATLANKVASRNEQVTIVSTDKGYCQLLSPTLRIRDYFQHRWLDEPFIEKEFGLKPEQLADYWGLAGISSSKITGIPGIGPKAALEILTQFPTIEAANESDELPKKYRKKFDEYYNTAILCRKVAGLRTDIELGFNLQDIRYEKPE.

Residue aspartate 109 coordinates Mg(2+). In terms of domain architecture, 5'-3' exonuclease spans leucine 165–lysine 255. Leucine 176, alanine 177, isoleucine 187, and isoleucine 190 together coordinate K(+). The segment at glycine 189–alanine 194 is interaction with DNA.

This sequence belongs to the Xni family. Requires Mg(2+) as cofactor. K(+) is required as a cofactor.

In terms of biological role, has flap endonuclease activity. During DNA replication, flap endonucleases cleave the 5'-overhanging flap structure that is generated by displacement synthesis when DNA polymerase encounters the 5'-end of a downstream Okazaki fragment. The polypeptide is Flap endonuclease Xni (Aliivibrio salmonicida (strain LFI1238) (Vibrio salmonicida (strain LFI1238))).